A 400-amino-acid chain; its full sequence is Keratin, type I cytoskeletal 19 (400 aa).

Positions 1–79 are head; the sequence is MTSYSYRQSS…TASDGLLAGN (79 aa). Omega-N-methylarginine is present on arginine 7. Phosphoserine occurs at positions 14 and 22. Arginine 24 is subject to Asymmetric dimethylarginine; alternate. Arginine 24 carries the post-translational modification Omega-N-methylarginine; alternate. The residue at position 32 (arginine 32) is an Omega-N-methylarginine. Serine 35 and serine 40 each carry phosphoserine. Omega-N-methylarginine is present on residues arginine 43 and arginine 51. Phosphoserine is present on residues serine 57 and serine 72. A coil 1A region spans residues 80–115; that stretch reads EKLTMQNLNDRLASYLDKVRALEAANGELEVKIRDW. The region spanning 80–391 is the IF rod domain; it reads EKLTMQNLND…SLLEGQEDHY (312 aa). Residues 116-133 form a linker 1 region; sequence YQKQGPGPSRDYSHYYTT. A coil 1B region spans residues 134-225; the sequence is IQDLRDKILG…KNHEEEISTL (92 aa). Positions 226-248 are linker 12; that stretch reads RGQVGGQVSVEVDSAPGTDLAKI. Residues 244-390 form a necessary for interaction with PNN region; sequence DLAKILSDMR…RSLLEGQEDH (147 aa). A coil 2 region spans residues 249-387; that stretch reads LSDMRSQYEV…ATYRSLLEGQ (139 aa). A Phosphothreonine modification is found at threonine 323. The rod-like helical tail stretch occupies residues 388-400; the sequence is EDHYNNLSASKVL. The residue at position 391 (tyrosine 391) is a Phosphotyrosine. 2 positions are modified to phosphoserine: serine 395 and serine 397.

This sequence belongs to the intermediate filament family. In terms of assembly, heterotetramer of two type I and two type II keratins. Interacts with PNN and the actin-binding domain of DMD. Interacts with HCV core protein. (Microbial infection) Interacts with hepatitis C virus/HCV core protein. In terms of tissue distribution, expressed in a defined zone of basal keratinocytes in the deep outer root sheath of hair follicles. Also observed in sweat gland and mammary gland ductal and secretory cells, bile ducts, gastrointestinal tract, bladder urothelium, oral epithelia, esophagus, ectocervical epithelium (at protein level). Expressed in epidermal basal cells, in nipple epidermis and a defined region of the hair follicle. Also seen in a subset of vascular wall cells in both the veins and artery of human umbilical cord, and in umbilical cord vascular smooth muscle. Observed in muscle fibers accumulating in the costameres of myoplasm at the sarcolemma in structures that contain dystrophin and spectrin.

Its function is as follows. Involved in the organization of myofibers. Together with KRT8, helps to link the contractile apparatus to dystrophin at the costameres of striated muscle. This is Keratin, type I cytoskeletal 19 (KRT19) from Homo sapiens (Human).